A 441-amino-acid polypeptide reads, in one-letter code: Glutamate-1-semialdehyde 2,1-aminomutase (441 aa).

At Lys275 the chain carries N6-(pyridoxal phosphate)lysine.

The protein belongs to the class-III pyridoxal-phosphate-dependent aminotransferase family. HemL subfamily. As to quaternary structure, homodimer. Pyridoxal 5'-phosphate is required as a cofactor.

It is found in the cytoplasm. It carries out the reaction (S)-4-amino-5-oxopentanoate = 5-aminolevulinate. It participates in porphyrin-containing compound metabolism; protoporphyrin-IX biosynthesis; 5-aminolevulinate from L-glutamyl-tRNA(Glu): step 2/2. In Deinococcus deserti (strain DSM 17065 / CIP 109153 / LMG 22923 / VCD115), this protein is Glutamate-1-semialdehyde 2,1-aminomutase.